The following is a 205-amino-acid chain: Microtubule-associated protein Jupiter (205 aa).

A Phosphoserine modification is found at Ser-30. Residues Thr-41, Thr-98, and Thr-102 each carry the phosphothreonine modification. Polar residues predominate over residues 124–135 (LISNSKGNYNGK). Residues 124 to 205 (LISNSKGNYN…PPGGYSSGLW (82 aa)) are disordered. The span at 136-149 (SGSVSSASSSVSSS) shows a compositional bias: low complexity. A phosphoserine mark is found at Ser-138 and Ser-149. Polar residues predominate over residues 181 to 191 (PANNGSSQVIN).

This sequence belongs to the MAP Jupiter family.

Its subcellular location is the nucleus. It is found in the cytoplasm. It localises to the cytoskeleton. The protein resides in the spindle. Its function is as follows. Binds to all microtubule populations. In Drosophila virilis (Fruit fly), this protein is Microtubule-associated protein Jupiter.